The following is a 235-amino-acid chain: MIDILPAFWAVIPAAGVGARMAADRPKQYLELAGQTLLEHSLDCFLGHPALKGVVVSIAEDDPYWPGLRCASDPRIHCAAGGRERADSVLNALLVLHAQGAADSDWVLVHDAARPNLARSDLDKLLSELADDPVGGLLAVPARDTLKRADSHGRVSATVDRSTIWQAYTPQMFRLGALHRALAECLVSDVVVTDEASAIEWSGQAPRLVEGRSDNIKVTRPEDLEWLRQRWAGKR.

It belongs to the IspD/TarI cytidylyltransferase family. IspD subfamily.

The catalysed reaction is 2-C-methyl-D-erythritol 4-phosphate + CTP + H(+) = 4-CDP-2-C-methyl-D-erythritol + diphosphate. The protein operates within isoprenoid biosynthesis; isopentenyl diphosphate biosynthesis via DXP pathway; isopentenyl diphosphate from 1-deoxy-D-xylulose 5-phosphate: step 2/6. In terms of biological role, catalyzes the formation of 4-diphosphocytidyl-2-C-methyl-D-erythritol from CTP and 2-C-methyl-D-erythritol 4-phosphate (MEP). The protein is 2-C-methyl-D-erythritol 4-phosphate cytidylyltransferase of Pseudomonas putida (strain ATCC 47054 / DSM 6125 / CFBP 8728 / NCIMB 11950 / KT2440).